Reading from the N-terminus, the 132-residue chain is Profilin-1 (132 aa).

This sequence belongs to the profilin family. As to quaternary structure, occurs in many kinds of cells as a complex with monomeric actin in a 1:1 ratio. Expressed in the nerve ring during late embryonic stages. In adults, expression is seen in the neurons, vulva and somatic gonad.

The protein localises to the cytoplasm. Its subcellular location is the cytoskeleton. In terms of biological role, binds to actin and affects the structure of the cytoskeleton. At high concentrations, profilin prevents the polymerization of actin, whereas it enhances it at low concentrations. By binding to PIP2, it inhibits the formation of IP3 and DG. Also binds to poly(L-proline) and phosphatidylinositol 4,5-bisphosphate micelles. This is Profilin-1 (pfn-1) from Caenorhabditis elegans.